Here is a 269-residue protein sequence, read N- to C-terminus: HTH-type transcriptional activator ArnR (269 aa).

Residues 1 to 218 (MTKSLFDVLK…LLRLTNSYTL (218 aa)) are Cytoplasmic-facing. The H-T-H motif DNA-binding region spans 39-62 (TTEISQTINTSRKSIIDAIRKLVD). A helical membrane pass occupies residues 219–239 (EMANVKVMGFILISLPLLMYF). At 240–242 (RDQ) the chain is on the extracellular side. A helical membrane pass occupies residues 243–263 (LGLIELPWLYAVIFLALLSVF). The Cytoplasmic portion of the chain corresponds to 264-269 (AQILSR).

It is found in the cell membrane. Involved in regulation of archaellar gene expression. Activates flaB transcription upon nutrient starvation by acting on the flaB promoter. The protein is HTH-type transcriptional activator ArnR of Sulfolobus acidocaldarius (strain ATCC 33909 / DSM 639 / JCM 8929 / NBRC 15157 / NCIMB 11770).